The primary structure comprises 442 residues: Protein translocase subunit SecF (442 aa).

A disordered region spans residues 1 to 39; sequence MASKAKTGRDDEATSAVELTEATESAVARTDGDSTTDTA. A run of 6 helical transmembrane segments spans residues 67–87, 187–207, 218–238, 243–263, 301–321, and 331–351; these read WFGV…FRGF, ITKK…LYIT, AITA…LVGF, ATVI…VIVF, LIGV…LGVG, and LIGI…LLVT. Positions 366–442 are disordered; sequence VLKRRNSGSP…PTGKRNAGRR (77 aa). Over residues 402-432 the composition is skewed to low complexity; the sequence is QASSQSAPRAAQGSSKPAPGARPVRPVGTRR. Basic residues predominate over residues 433–442; that stretch reads PTGKRNAGRR.

It belongs to the SecD/SecF family. SecF subfamily. In terms of assembly, forms a complex with SecD. Part of the essential Sec protein translocation apparatus which comprises SecA, SecYEG and auxiliary proteins SecDF. Other proteins may also be involved.

It localises to the cell membrane. Its function is as follows. Part of the Sec protein translocase complex. Interacts with the SecYEG preprotein conducting channel. SecDF uses the proton motive force (PMF) to complete protein translocation after the ATP-dependent function of SecA. The protein is Protein translocase subunit SecF of Mycobacterium tuberculosis (strain CDC 1551 / Oshkosh).